We begin with the raw amino-acid sequence, 393 residues long: Digeranylgeranylglycerophospholipid reductase (393 aa).

9 residues coordinate FAD: A13, D32, C43, A44, G46, R95, V119, D274, and G286. Residues R327 and G363 each coordinate a 2,3-bis-O-(geranylgeranyl)-sn-glycerol 1-phospholipid.

This sequence belongs to the geranylgeranyl reductase family. DGGGPL reductase subfamily. FAD serves as cofactor.

It catalyses the reaction a 2,3-bis-O-phytanyl-sn-glycerol 1-phospholipid + 8 A = a 2,3-bis-O-(geranylgeranyl)-sn-glycerol 1-phospholipid + 8 AH2. It carries out the reaction 2,3-bis-O-(phytanyl)-sn-glycerol 1-phosphate + 8 A = 2,3-bis-O-(geranylgeranyl)-sn-glycerol 1-phosphate + 8 AH2. The catalysed reaction is CDP-2,3-bis-O-(geranylgeranyl)-sn-glycerol + 8 AH2 = CDP-2,3-bis-O-(phytanyl)-sn-glycerol + 8 A. The enzyme catalyses archaetidylserine + 8 AH2 = 2,3-bis-O-phytanyl-sn-glycero-3-phospho-L-serine + 8 A. The protein operates within membrane lipid metabolism; glycerophospholipid metabolism. Functionally, is involved in the reduction of 2,3-digeranylgeranylglycerophospholipids (unsaturated archaeols) into 2,3-diphytanylglycerophospholipids (saturated archaeols) in the biosynthesis of archaeal membrane lipids. Catalyzes the formation of archaetidic acid (2,3-di-O-phytanyl-sn-glyceryl phosphate) from 2,3-di-O-geranylgeranylglyceryl phosphate (DGGGP) via the hydrogenation of each double bond of the isoprenoid chains. Is also probably able to reduce double bonds of geranyl groups in CDP-2,3-bis-O-(geranylgeranyl)-sn-glycerol and archaetidylserine, thus acting at various stages in the biosynthesis of archaeal membrane lipids. This chain is Digeranylgeranylglycerophospholipid reductase, found in Pyrococcus horikoshii (strain ATCC 700860 / DSM 12428 / JCM 9974 / NBRC 100139 / OT-3).